Here is a 430-residue protein sequence, read N- to C-terminus: Protein translocase subunit SecY (430 aa).

A run of 10 helical transmembrane segments spans residues 18–38, 68–88, 117–137, 148–168, 179–199, 215–235, 270–290, 308–328, 368–388, and 390–410; these read IFFTLAMLVIFKIGTYIPAPG, FSIFAMGIMPYITASIVMQLL, FAIILAFIQSIGMAFQFNNYL, MSYLLIAIVLTTGTAFLLWLG, GISIIIFAGILSTLPSSLIQF, LQVAGLVIGLVLLTMGAVYVL, VIPVIFAMAFFLLPRTLTMFF, NIGMVIYIILIIAFTYFYAFV, FVGSIFLAVIAILPILATKFM, and LPQSIQVGGTSLLIVIGVAIE.

This sequence belongs to the SecY/SEC61-alpha family. In terms of assembly, component of the Sec protein translocase complex. Heterotrimer consisting of SecY, SecE and SecG subunits. The heterotrimers can form oligomers, although 1 heterotrimer is thought to be able to translocate proteins. Interacts with the ribosome. Interacts with SecDF, and other proteins may be involved. Interacts with SecA.

The protein localises to the cell membrane. In terms of biological role, the central subunit of the protein translocation channel SecYEG. Consists of two halves formed by TMs 1-5 and 6-10. These two domains form a lateral gate at the front which open onto the bilayer between TMs 2 and 7, and are clamped together by SecE at the back. The channel is closed by both a pore ring composed of hydrophobic SecY resides and a short helix (helix 2A) on the extracellular side of the membrane which forms a plug. The plug probably moves laterally to allow the channel to open. The ring and the pore may move independently. In Staphylococcus carnosus (strain TM300), this protein is Protein translocase subunit SecY.